Consider the following 393-residue polypeptide: NAD(P)H-quinone oxidoreductase subunit H, chloroplastic (393 aa).

Belongs to the complex I 49 kDa subunit family. As to quaternary structure, NDH is composed of at least 16 different subunits, 5 of which are encoded in the nucleus.

The protein resides in the plastid. The protein localises to the chloroplast thylakoid membrane. The enzyme catalyses a plastoquinone + NADH + (n+1) H(+)(in) = a plastoquinol + NAD(+) + n H(+)(out). It catalyses the reaction a plastoquinone + NADPH + (n+1) H(+)(in) = a plastoquinol + NADP(+) + n H(+)(out). In terms of biological role, NDH shuttles electrons from NAD(P)H:plastoquinone, via FMN and iron-sulfur (Fe-S) centers, to quinones in the photosynthetic chain and possibly in a chloroplast respiratory chain. The immediate electron acceptor for the enzyme in this species is believed to be plastoquinone. Couples the redox reaction to proton translocation, and thus conserves the redox energy in a proton gradient. The polypeptide is NAD(P)H-quinone oxidoreductase subunit H, chloroplastic (Nicotiana tomentosiformis (Tobacco)).